Consider the following 154-residue polypeptide: Putative NADPH-dependent 7-cyano-7-deazaguanine reductase (154 aa).

Asp-52 (proton donor) is an active-site residue. Substrate is bound by residues 67–69 (VES) and 86–87 (HE).

It belongs to the GTP cyclohydrolase I family. QueF type 1 subfamily.

The protein resides in the cytoplasm. It catalyses the reaction 7-aminomethyl-7-carbaguanine + 2 NADP(+) = 7-cyano-7-deazaguanine + 2 NADPH + 3 H(+). The protein operates within tRNA modification; tRNA-queuosine biosynthesis. Catalyzes the NADPH-dependent reduction of 7-cyano-7-deazaguanine (preQ0) to 7-aminomethyl-7-deazaguanine (preQ1). The chain is Putative NADPH-dependent 7-cyano-7-deazaguanine reductase from Streptococcus pneumoniae (strain ATCC BAA-255 / R6).